The primary structure comprises 500 residues: Lysine--tRNA ligase (500 aa).

The Mg(2+) site is built by Glu-410 and Glu-417.

The protein belongs to the class-II aminoacyl-tRNA synthetase family. In terms of assembly, homodimer. Mg(2+) is required as a cofactor.

The protein resides in the cytoplasm. It carries out the reaction tRNA(Lys) + L-lysine + ATP = L-lysyl-tRNA(Lys) + AMP + diphosphate. This Pseudomonas entomophila (strain L48) protein is Lysine--tRNA ligase.